The primary structure comprises 28 residues: Aspartate aminotransferase, mitochondrial (28 aa).

Belongs to the class-I pyridoxal-phosphate-dependent aminotransferase family. In terms of assembly, homodimer. Pyridoxal 5'-phosphate serves as cofactor.

It is found in the mitochondrion matrix. It catalyses the reaction L-aspartate + 2-oxoglutarate = oxaloacetate + L-glutamate. Plays a key role in amino acid metabolism. Important for metabolite exchange between mitochondria and cytosol. In Catharanthus roseus (Madagascar periwinkle), this protein is Aspartate aminotransferase, mitochondrial.